We begin with the raw amino-acid sequence, 397 residues long: Acetate kinase 1 (397 aa).

N8 contributes to the Mg(2+) binding site. K15 is a binding site for ATP. Residue R89 participates in substrate binding. Catalysis depends on D146, which acts as the Proton donor/acceptor. Residues 206–210 (HLGNG), 281–283 (DLR), and 329–333 (GIGEN) each bind ATP. Mg(2+) is bound at residue E382.

This sequence belongs to the acetokinase family. Homodimer. Requires Mg(2+) as cofactor. The cofactor is Mn(2+).

The protein localises to the cytoplasm. The catalysed reaction is acetate + ATP = acetyl phosphate + ADP. It functions in the pathway metabolic intermediate biosynthesis; acetyl-CoA biosynthesis; acetyl-CoA from acetate: step 1/2. In terms of biological role, catalyzes the formation of acetyl phosphate from acetate and ATP. Can also catalyze the reverse reaction. The sequence is that of Acetate kinase 1 from Listeria monocytogenes serovar 1/2a (strain ATCC BAA-679 / EGD-e).